The following is a 647-amino-acid chain: Beta-galactosidase (647 aa).

The N-terminal stretch at 1–24 (MLRVPLCTPLPLLALLQLLGAAHG) is a signal peptide. Residues 25-29 (IYNVT) constitute a propeptide that is removed on maturation. The N-linked (GlcNAc...) asparagine glycan is linked to asparagine 27. Substrate contacts are provided by tyrosine 84, glutamate 130, and asparagine 188. Glutamate 189 serves as the catalytic Proton donor. Cysteine 196 and cysteine 231 form a disulfide bridge. An N-linked (GlcNAc...) asparagine glycan is attached at asparagine 248. The Nucleophile role is filled by glutamate 269. Position 334 (tyrosine 334) interacts with substrate. N-linked (GlcNAc...) asparagine glycosylation is found at asparagine 500, asparagine 504, asparagine 510, asparagine 544, asparagine 557, and asparagine 617. Residues cysteine 628 and cysteine 636 are joined by a disulfide bond.

This sequence belongs to the glycosyl hydrolase 35 family. Homodimer. May form higher multimers.

The protein resides in the lysosome. The catalysed reaction is Hydrolysis of terminal non-reducing beta-D-galactose residues in beta-D-galactosides.. Cleaves beta-linked terminal galactosyl residues from gangliosides, glycoproteins, and glycosaminoglycans. The polypeptide is Beta-galactosidase (Glb1) (Mus musculus (Mouse)).